We begin with the raw amino-acid sequence, 408 residues long: Peptidase T (408 aa).

Histidine 78 contacts Zn(2+). Aspartate 80 is an active-site residue. Aspartate 141 is a binding site for Zn(2+). Glutamate 175 serves as the catalytic Proton acceptor. Residues glutamate 176, aspartate 198, and histidine 380 each contribute to the Zn(2+) site.

The protein belongs to the peptidase M20B family. Zn(2+) is required as a cofactor.

The protein localises to the cytoplasm. It carries out the reaction Release of the N-terminal residue from a tripeptide.. In terms of biological role, cleaves the N-terminal amino acid of tripeptides. The polypeptide is Peptidase T (Clostridium botulinum (strain Kyoto / Type A2)).